Here is a 192-residue protein sequence, read N- to C-terminus: Pyridoxine/pyridoxamine 5'-phosphate oxidase (192 aa).

FMN is bound by residues 41-46 (RMMLLK), 56-57 (FT), arginine 62, lysine 63, and glutamine 85. Lysine 46 is a substrate binding site. Residues tyrosine 103, arginine 107, and serine 111 each coordinate substrate. FMN is bound by residues 120-121 (QS) and tryptophan 165. Residue 171–173 (RLH) participates in substrate binding. Arginine 175 lines the FMN pocket.

Belongs to the pyridoxamine 5'-phosphate oxidase family. Homodimer. Requires FMN as cofactor.

The enzyme catalyses pyridoxamine 5'-phosphate + O2 + H2O = pyridoxal 5'-phosphate + H2O2 + NH4(+). The catalysed reaction is pyridoxine 5'-phosphate + O2 = pyridoxal 5'-phosphate + H2O2. It participates in cofactor metabolism; pyridoxal 5'-phosphate salvage; pyridoxal 5'-phosphate from pyridoxamine 5'-phosphate: step 1/1. The protein operates within cofactor metabolism; pyridoxal 5'-phosphate salvage; pyridoxal 5'-phosphate from pyridoxine 5'-phosphate: step 1/1. Its function is as follows. Catalyzes the oxidation of either pyridoxine 5'-phosphate (PNP) or pyridoxamine 5'-phosphate (PMP) into pyridoxal 5'-phosphate (PLP). The protein is Pyridoxine/pyridoxamine 5'-phosphate oxidase of Zymomonas mobilis subsp. mobilis (strain ATCC 31821 / ZM4 / CP4).